The sequence spans 439 residues: GTPase Der (439 aa).

EngA-type G domains are found at residues 2-168 (ATVL…EEKG) and 181-357 (IKVA…ASYT). GTP-binding positions include 8–15 (GKPNVGKS), 55–59 (DTCGV), 118–121 (NKTE), 187–194 (GRPNVGKS), 234–238 (DTAGL), and 300–303 (NKWD). The 82-residue stretch at 358–439 (TKVPSSAINS…PIFLKFKRSR (82 aa)) folds into the KH-like domain.

It belongs to the TRAFAC class TrmE-Era-EngA-EngB-Septin-like GTPase superfamily. EngA (Der) GTPase family. As to quaternary structure, associates with the 50S ribosomal subunit.

Functionally, GTPase that plays an essential role in the late steps of ribosome biogenesis. In Thermotoga petrophila (strain ATCC BAA-488 / DSM 13995 / JCM 10881 / RKU-1), this protein is GTPase Der.